A 418-amino-acid polypeptide reads, in one-letter code: BTB and MATH domain-containing protein 41 (418 aa).

Residues 1 to 33 form a disordered region; sequence MEINNGAQPENAAVSIPSRSPSGKSEKRKSPSI. The 129-residue stretch at 45 to 173 folds into the MATH domain; that stretch reads SFTNYWSVER…NDILTIGCEL (129 aa). In terms of domain architecture, BTB spans 232 to 293; the sequence is SDFIIVASCG…TLDVLLRHMY (62 aa).

As to quaternary structure, interacts with cul-3.

The protein operates within protein modification; protein ubiquitination. In terms of biological role, probable substrate-specific adapter of an E3 ubiquitin-protein ligase complex which mediates the ubiquitination and subsequent proteasomal degradation of target proteins. The polypeptide is BTB and MATH domain-containing protein 41 (bath-41) (Caenorhabditis elegans).